Reading from the N-terminus, the 178-residue chain is Fatty-acid and retinol-binding protein 1 (178 aa).

The signal sequence occupies residues 1-16; it reads MYHQLILMALIGVIMA. Coiled-coil stretches lie at residues 67–89 and 122–154; these read DAAL…ELRN and QKLD…LKAT.

This sequence belongs to the fatty-acid and retinol-binding protein (FARBP) family. In terms of processing, not glycosylated.

It localises to the secreted. Its function is as follows. Binds retinol and different fatty acids. In Litomosoides sigmodontis (Filarial nematode worm), this protein is Fatty-acid and retinol-binding protein 1.